The following is a 78-amino-acid chain: Delta-conotoxin-like TxMKLT1-0111 (78 aa).

Residues 1–22 (MKLTCMMIVAVLFLTAWTFATA) form the signal peptide. Residues 23-49 (DDSGNGLENLFSNAHHQMKNPEASKLN) constitute a propeptide that is removed on maturation. Intrachain disulfides connect Cys53–Cys68, Cys60–Cys72, and Cys67–Cys77.

This sequence belongs to the conotoxin O1 superfamily. Expressed by the venom duct.

Its subcellular location is the secreted. Its function is as follows. Delta-conotoxins bind to site 6 of voltage-gated sodium channels (Nav) and inhibit the inactivation process. This Conus textile (Cloth-of-gold cone) protein is Delta-conotoxin-like TxMKLT1-0111.